The primary structure comprises 346 residues: Selenide, water dikinase (346 aa).

The active site involves Cys-15. ATP-binding positions include Lys-18 and 46–48; that span reads SKD. Asp-49 is a Mg(2+) binding site. ATP is bound by residues Asp-66, Asp-89, and 137–139; that span reads GHS. Mg(2+) is bound at residue Asp-89. A Mg(2+)-binding site is contributed by Asp-225.

The protein belongs to the selenophosphate synthase 1 family. Class I subfamily. In terms of assembly, homodimer. Mg(2+) is required as a cofactor.

It carries out the reaction hydrogenselenide + ATP + H2O = selenophosphate + AMP + phosphate + 2 H(+). Its function is as follows. Synthesizes selenophosphate from selenide and ATP. This is Selenide, water dikinase from Photobacterium profundum (strain SS9).